We begin with the raw amino-acid sequence, 160 residues long: Putative NrdI-like protein (160 aa).

The protein belongs to the NrdI family.

The chain is Putative NrdI-like protein from Streptococcus pyogenes serotype M6 (strain ATCC BAA-946 / MGAS10394).